The primary structure comprises 1887 residues: MKPEVEQELAHILLTELLAYQFASPVRWIETQDVFLKDFNTERVVEIGPSPTLAGMAQRTLKNKYESYDAALSLHREILCYSKDAKEIYYTPDPSELAAKEEPAKEEAPAPTPAASAPAPAAAAPAPVAAAAPAAAAAEIADEPVKASLLLHVLVAHKLKKSLDSIPMSKTIKDLVGGKSTVQNEILGDLGKEFGTTPEKPEETPLEELAETFQDTFSGALGKQSSSLLSRLISSKMPGGFTITVARKYLQTRWGLPSGRQDGVLLVALSNEPAARLGSEADAKAFLDSMAQKYASIVGVDLSSAASASGAAGAGAAAGAAMIDAGALEEITKDHKVLARQQLQVLARYLKMDLDNGERKFLKEKDTVAELQAQLDYLNAELGEFFVNGVATSFSRKKARTFDSSWNWAKQSLLSLYFEIIHGVLKNVDREVVSEAINIMNRSNDALIKFMEYHISNTDETKGENYQLVKTLGEQLIENCKQVLDVDPVYKDVAKPTGPKTAIDKNGNITYSEEPREKVRKLSQYVQEMALGGPITKESQPTIEEDLTRVYKAISAQADKQDISSSTRVEFEKLYSDLMKFLESSKEIDPSQTTQLAGMDVEDALDKDSTKEVASLPNKSTISKTVSSTIPRETIPFLHLRKKTPAGDWKYDRQLSSLFLDGLEKAAFNGVTFKDKYVLITGAGKGSIGAEVLQGLLQGGAKVVVTTSRFSKQVTDYYQSIYAKYGAKGSTLIVVPFNQGSKQDVEALIEFIYDTEKNGGLGWDLDAIIPFAAIPEQGIELEHIDSKSEFAHRIMLTNILRMMGCVKKQKSARGIETRPAQVILPMSPNHGTFGGDGMYSESKLSLETLFNRWHSESWANQLTVCGAIIGWTRGTGLMSANNIIAEGIEKMGVRTFSQKEMAFNLLGLLTPEVVELCQKSPVMADLNGGLQFVPELKEFTAKLRKELVETSEVRKAVSIETALEHKVVNGNSADAAYAQVEIQPRANIQLDFPELKPYKQVKQIAPAELEGLLDLERVIVVTGFAEVGPWGSARTRWEMEAFGEFSLEGCVEMAWIMGFISYHNGNLKGRPYTGWVDSKTKEPVDDKDVKAKYETSILEHSGIRLIEPELFNGYNPEKKEMIQEVIVEEDLEPFEASKETAEQFKHQHGDKVDIFEIPETGEYSVKLLKGATLYIPKALRFDRLVAGQIPTGWNAKTYGISDDIISQVDPITLFVLVSVVEAFIASGITDPYEMYKYVHVSEVGNCSGSGMGGVSALRGMFKDRFKDEPVQNDILQESFINTMSAWVNMLLISSSGPIKTPVGACATSVESVDIGVETILSGKARICIVGGYDDFQEEGSFEFGNMKATSNTLEEFEHGRTPAEMSRPATTTRNGFMEAQGAGIQIIMQADLALKMGVPIYGIVAMAATATDKIGRSVPAPGKGILTTAREHHSSVKYASPNLNMKYRKRQLVTREAQIKDWVENELEALKLEAEEIPSEDQNEFLLERTREIHNEAESQLRAAQQQWGNDFYKRDPRIAPLRGALATYGLTIDDLGVASFHGTSTKANDKNESATINEMMKHLGRSEGNPVIGVFQKFLTGHPKGAAGAWMMNGALQILNSGIIPGNRNADNVDKILEQFEYVLYPSKTLKTDGVRAVSITSFGFGQKGGQAIVVHPDYLYGAITEDRYNEYVAKVSAREKSAYKFFHNGMIYNKLFVSKEHAPYTDELEEDVYLDPLARVSKDKKSGSLTFNSKNIQSKDSYINANTIETAKMIENMTKEKVSNGGVGVDVELITSINVENDTFIERNFTPQEIEYCSAQPSVQSSFAGTWSAKEAVFKSLGVKSLGGGAALKDIEIVRVNKNAPAVELHGNAKKAAEEAGVTDVKVSISHDDLQAVAVAVSTKK.

Residue K37 forms a Glycyl lysine isopeptide (Lys-Gly) (interchain with G-Cter in ubiquitin) linkage. S50 is subject to Phosphoserine. A disordered region spans residues 96–120 (ELAAKEEPAKEEAPAPTPAASAPAP). A compositionally biased stretch (basic and acidic residues) spans 98–108 (AAKEEPAKEEA). The Carrier domain maps to 145–220 (VKASLLLHVL…ETFQDTFSGA (76 aa)). Position 180 is an O-(pantetheine 4'-phosphoryl)serine (S180). S523 carries the post-translational modification Phosphoserine. Residues 675–874 (DKYVLITGAG…CGAIIGWTRG (200 aa)) are beta-ketoacyl reductase. S958 carries the post-translational modification Phosphoserine. In terms of domain architecture, Ketosynthase family 3 (KS3) spans 1123 to 1657 (QEVIVEEDLE…QKGGQAIVVH (535 aa)). Catalysis depends on C1305, which acts as the For beta-ketoacyl synthase activity. S1440 bears the Phosphoserine mark. Catalysis depends on for beta-ketoacyl synthase activity residues H1542 and H1583. Mg(2+) contacts are provided by D1772, V1773, and E1774. Acetyl-CoA is bound by residues 1772-1774 (DVE), Y1798, S1808, 1817-1827 (EAVFKSLGVKS), 1841-1844 (RVNK), and 1871-1873 (ISH). Positions 1872 and 1873 each coordinate Mg(2+).

The protein belongs to the thiolase-like superfamily. Fungal fatty acid synthetase subunit alpha family. In terms of assembly, [Alpha(6)beta(6)] hexamers of two multifunctional subunits (alpha and beta). 4'-phosphopantetheine is transferred from CoA to a specific serine of the Acyl carrier domain by the C-terminal PPT domain. This modification is essential for activity because fatty acids are bound in thioester linkage to the sulfhydryl of the prosthetic group.

It catalyses the reaction acetyl-CoA + n malonyl-CoA + 2n NADPH + 4n H(+) = a long-chain-acyl-CoA + n CoA + n CO2 + 2n NADP(+).. It carries out the reaction a fatty acyl-[ACP] + malonyl-[ACP] + H(+) = a 3-oxoacyl-[ACP] + holo-[ACP] + CO2. The enzyme catalyses a (3R)-hydroxyacyl-[ACP] + NADP(+) = a 3-oxoacyl-[ACP] + NADPH + H(+). With respect to regulation, inhibited by cerulenin by covalent binding to active site of the ketoacyl synthase (KS) region. Functionally, fatty acid synthetase catalyzes the formation of long-chain fatty acids from acetyl-CoA, malonyl-CoA and NADPH. The alpha subunit contains domains for: acyl carrier protein, 3-oxoacyl-[acyl-carrier-protein] reductase, and 3-oxoacyl-[acyl-carrier-protein] synthase. This subunit coordinates the binding of the six beta subunits to the enzyme complex. The sequence is that of Fatty acid synthase subunit alpha (FAS2) from Saccharomyces cerevisiae (strain ATCC 204508 / S288c) (Baker's yeast).